A 387-amino-acid polypeptide reads, in one-letter code: Aminodeoxyfutalosine synthase (387 aa).

The Radical SAM core domain occupies 52-279; that stretch reads VHFNVNRHLN…ARTQMATGAE (228 aa). [4Fe-4S] cluster contacts are provided by C66, C70, and C73.

This sequence belongs to the radical SAM superfamily. MqnE family. It depends on [4Fe-4S] cluster as a cofactor.

It carries out the reaction 3-[(1-carboxyvinyl)-oxy]benzoate + S-adenosyl-L-methionine + H2O = 6-amino-6-deoxyfutalosine + hydrogencarbonate + L-methionine + H(+). The protein operates within quinol/quinone metabolism; menaquinone biosynthesis. Functionally, radical SAM enzyme that catalyzes the addition of the adenosyl radical to the double bond of 3-[(1-carboxyvinyl)oxy]benzoate, leading to aminodeoxyfutalosine (AFL), a key intermediate in the formation of menaquinone (MK, vitamin K2) from chorismate. The polypeptide is Aminodeoxyfutalosine synthase (Streptomyces coelicolor (strain ATCC BAA-471 / A3(2) / M145)).